A 662-amino-acid chain; its full sequence is Leucine aminopeptidase 2 (662 aa).

A peptide is bound by residues 178–180 (QLE) and 304–309 (PYGGME). His-333 contributes to the Zn(2+) binding site. Glu-334 functions as the Proton acceptor in the catalytic mechanism. His-337 and Glu-356 together coordinate Zn(2+). Residue Tyr-422 is the Proton donor of the active site.

The protein belongs to the peptidase M1 family. It depends on Zn(2+) as a cofactor.

It localises to the cytoplasm. Its subcellular location is the nucleus. The catalysed reaction is an epoxide + H2O = an ethanediol. Its function is as follows. Aminopeptidase that preferentially cleaves di- and tripeptides. Also has low epoxide hydrolase activity (in vitro). Can hydrolyze the epoxide leukotriene LTA(4) but it forms preferentially 5,6-dihydroxy-7,9,11,14-eicosatetraenoic acid rather than the cytokine leukotriene B(4) as the product compared to the homologous mammalian enzyme (in vitro). This is Leucine aminopeptidase 2 from Kluyveromyces lactis (strain ATCC 8585 / CBS 2359 / DSM 70799 / NBRC 1267 / NRRL Y-1140 / WM37) (Yeast).